The primary structure comprises 147 residues: Large ribosomal subunit protein bL9 (147 aa).

This sequence belongs to the bacterial ribosomal protein bL9 family.

In terms of biological role, binds to the 23S rRNA. This is Large ribosomal subunit protein bL9 from Thermodesulfovibrio yellowstonii (strain ATCC 51303 / DSM 11347 / YP87).